A 630-amino-acid polypeptide reads, in one-letter code: Golgi apyrase (630 aa).

Residues 1–500 are Lumenal-facing; the sequence is MLIENTNDRF…RKQSSSLSNK (500 aa). The Proton acceptor role is filled by E152. A helical transmembrane segment spans residues 501–517; sequence GFLMWFAIICCIFYLIF. The Cytoplasmic portion of the chain corresponds to 518-630; sequence HRSHIIRRRF…SKFKDSRLYD (113 aa). Residues 586-606 form a disordered region; that stretch reads SSATMQREHEPQRTASQSANL.

The protein belongs to the GDA1/CD39 NTPase family. Interacts with activator subunit VMA13 of vacuolar H(+)-ATPase. Interacts with CDC55; this interaction is disrupted by adenovirus E4orf4, which remains associated with both YND1 and CDC55. Requires Ca(2+) as cofactor. Mg(2+) is required as a cofactor. The cofactor is Mn(2+).

Its subcellular location is the golgi apparatus. It localises to the membrane. It catalyses the reaction a ribonucleoside 5'-triphosphate + 2 H2O = a ribonucleoside 5'-phosphate + 2 phosphate + 2 H(+). It functions in the pathway protein modification; protein glycosylation. Activity is inhibited both by interaction with VMA13 and by V-ATPase acidification of the lumen. The activity of VMA13 is not required for YND1 inhibition. Functionally, catalyzes the hydrolysis of phosphoanhydride bonds of nucleoside tri- and di-phosphates. Has equal high activity toward ADP/ATP, GDP/GTP, and UDP/UTP and approximately 50% less toward CDP/CTP and thiamine pyrophosphate. Has no activity toward GMP. Required for Golgi glycosylation and cell wall integrity. Together with CDC55, required for adenovirus E4orf4 (early region 4 open reading frame 4) induced toxicity, the apyrase activity is not required for this function. Plays a role in sphingolipid synthesis. This is Golgi apyrase (YND1) from Saccharomyces cerevisiae (strain ATCC 204508 / S288c) (Baker's yeast).